The primary structure comprises 169 residues: Large ribosomal subunit protein uL10 (169 aa).

Belongs to the universal ribosomal protein uL10 family. In terms of assembly, part of the 50S ribosomal subunit.

The chain is Large ribosomal subunit protein uL10 (rplJ) from Deinococcus radiodurans (strain ATCC 13939 / DSM 20539 / JCM 16871 / CCUG 27074 / LMG 4051 / NBRC 15346 / NCIMB 9279 / VKM B-1422 / R1).